The following is a 116-amino-acid chain: Large ribosomal subunit protein bL19 (116 aa).

The protein belongs to the bacterial ribosomal protein bL19 family.

Functionally, this protein is located at the 30S-50S ribosomal subunit interface and may play a role in the structure and function of the aminoacyl-tRNA binding site. The sequence is that of Large ribosomal subunit protein bL19 from Staphylococcus aureus (strain Mu3 / ATCC 700698).